The primary structure comprises 368 residues: tRNA/tmRNA (uracil-C(5))-methyltransferase (368 aa).

Residues Gln-186, Tyr-214, Asn-219, Glu-235, and Asp-295 each coordinate S-adenosyl-L-methionine. Catalysis depends on Cys-320, which acts as the Nucleophile. Glu-354 acts as the Proton acceptor in catalysis.

The protein belongs to the class I-like SAM-binding methyltransferase superfamily. RNA M5U methyltransferase family. TrmA subfamily.

It catalyses the reaction uridine(54) in tRNA + S-adenosyl-L-methionine = 5-methyluridine(54) in tRNA + S-adenosyl-L-homocysteine + H(+). It carries out the reaction uridine(341) in tmRNA + S-adenosyl-L-methionine = 5-methyluridine(341) in tmRNA + S-adenosyl-L-homocysteine + H(+). Dual-specificity methyltransferase that catalyzes the formation of 5-methyluridine at position 54 (m5U54) in all tRNAs, and that of position 341 (m5U341) in tmRNA (transfer-mRNA). This chain is tRNA/tmRNA (uracil-C(5))-methyltransferase, found in Aromatoleum aromaticum (strain DSM 19018 / LMG 30748 / EbN1) (Azoarcus sp. (strain EbN1)).